The following is a 569-amino-acid chain: Probable protein phosphatase 2C BIPP2C1 (569 aa).

Disordered regions lie at residues 120-214 (EVSP…KVTG) and 251-279 (SLDD…GSSI). Residues 179–188 (ESERGSDADG) show a composition bias toward basic and acidic residues. Residues 329-564 (AAMLPHPSKV…DDVTVVVSVV (236 aa)) form the PPM-type phosphatase domain. 4 residues coordinate Mn(2+): aspartate 358, glycine 359, aspartate 488, and aspartate 555.

This sequence belongs to the PP2C family. It depends on Mg(2+) as a cofactor. Mn(2+) is required as a cofactor.

The enzyme catalyses O-phospho-L-seryl-[protein] + H2O = L-seryl-[protein] + phosphate. It catalyses the reaction O-phospho-L-threonyl-[protein] + H2O = L-threonyl-[protein] + phosphate. May play a role in responses to biotic and abiotic stresses. The chain is Probable protein phosphatase 2C BIPP2C1 (BIPP2C1) from Oryza sativa subsp. japonica (Rice).